The following is a 349-amino-acid chain: Probable ethanolamine kinase A (349 aa).

The protein belongs to the choline/ethanolamine kinase family.

It is found in the cytoplasm. It catalyses the reaction ethanolamine + ATP = phosphoethanolamine + ADP + H(+). The protein operates within phospholipid metabolism; phosphatidylethanolamine biosynthesis; phosphatidylethanolamine from ethanolamine: step 1/3. Functionally, highly specific for ethanolamine phosphorylation. May be a rate-controlling step in phosphatidylethanolamine biosynthesis. The chain is Probable ethanolamine kinase A (etnkA) from Dictyostelium discoideum (Social amoeba).